A 140-amino-acid polypeptide reads, in one-letter code: uncharacterized protein (140 aa).

N-linked (GlcNAc...) asparagine glycosylation is present at asparagine 36. The chain crosses the membrane as a helical span at residues 91-107 (LFMSLIGLCVCYMNLVF). Positions 113–122 (QPSSSGSKGN) are enriched in polar residues. The interval 113 to 140 (QPSSSGSKGNTETTIETTTEVETETAKQ) is disordered. The segment covering 131-140 (TEVETETAKQ) has biased composition (acidic residues).

It is found in the endoplasmic reticulum membrane. This is an uncharacterized protein from Saccharomyces cerevisiae (strain ATCC 204508 / S288c) (Baker's yeast).